The primary structure comprises 312 residues: Porphobilinogen deaminase (312 aa).

Cys-241 carries the post-translational modification S-(dipyrrolylmethanemethyl)cysteine.

It belongs to the HMBS family. As to quaternary structure, monomer. Dipyrromethane is required as a cofactor.

It catalyses the reaction 4 porphobilinogen + H2O = hydroxymethylbilane + 4 NH4(+). The protein operates within porphyrin-containing compound metabolism; protoporphyrin-IX biosynthesis; coproporphyrinogen-III from 5-aminolevulinate: step 2/4. Its pathway is porphyrin-containing compound metabolism; chlorophyll biosynthesis. Functionally, tetrapolymerization of the monopyrrole PBG into the hydroxymethylbilane pre-uroporphyrinogen in several discrete steps. In Prosthecochloris aestuarii (strain DSM 271 / SK 413), this protein is Porphobilinogen deaminase.